The following is a 339-amino-acid chain: Nitrilase (339 aa).

Residues 7–277 (YRVAAVQASP…EGITYADIDL (271 aa)) enclose the CN hydrolase domain. The active-site Proton acceptor is E47. The active-site Proton donor is the K128. C162 acts as the Nucleophile in catalysis.

It belongs to the carbon-nitrogen hydrolase superfamily. Nitrilase family.

It carries out the reaction a nitrile + 2 H2O = a carboxylate + NH4(+). The sequence is that of Nitrilase (nit) from Bacillus sp. (strain OxB-1).